The sequence spans 205 residues: ATP-dependent Clp protease proteolytic subunit (205 aa).

Ser108 functions as the Nucleophile in the catalytic mechanism. The active site involves His133.

This sequence belongs to the peptidase S14 family. As to quaternary structure, fourteen ClpP subunits assemble into 2 heptameric rings which stack back to back to give a disk-like structure with a central cavity, resembling the structure of eukaryotic proteasomes.

Its subcellular location is the cytoplasm. The catalysed reaction is Hydrolysis of proteins to small peptides in the presence of ATP and magnesium. alpha-casein is the usual test substrate. In the absence of ATP, only oligopeptides shorter than five residues are hydrolyzed (such as succinyl-Leu-Tyr-|-NHMec, and Leu-Tyr-Leu-|-Tyr-Trp, in which cleavage of the -Tyr-|-Leu- and -Tyr-|-Trp bonds also occurs).. Its function is as follows. Cleaves peptides in various proteins in a process that requires ATP hydrolysis. Has a chymotrypsin-like activity. Plays a major role in the degradation of misfolded proteins. The polypeptide is ATP-dependent Clp protease proteolytic subunit (Alcanivorax borkumensis (strain ATCC 700651 / DSM 11573 / NCIMB 13689 / SK2)).